A 453-amino-acid polypeptide reads, in one-letter code: Bifunctional protein GlmU (453 aa).

Residues 1 to 225 (MNIVILAAGT…EWETLGVNSK (225 aa)) form a pyrophosphorylase region. UDP-N-acetyl-alpha-D-glucosamine-binding positions include 6-9 (LAAG), Lys-20, Gln-71, 76-77 (GT), 98-100 (YGD), Gly-135, Glu-150, Asn-165, and Asn-223. Residue Asp-100 participates in Mg(2+) binding. Residue Asn-223 participates in Mg(2+) binding. The tract at residues 226–246 (QQLAELERIHQRNVADALLVA) is linker. The segment at 247 to 453 (GVTLADPARL…GYVRPTKKKS (207 aa)) is N-acetyltransferase. UDP-N-acetyl-alpha-D-glucosamine contacts are provided by Arg-329 and Lys-347. His-359 acts as the Proton acceptor in catalysis. UDP-N-acetyl-alpha-D-glucosamine is bound by residues Tyr-362 and Asn-373. Acetyl-CoA is bound by residues Ala-376, 382–383 (NY), Ser-401, and Ala-419.

This sequence in the N-terminal section; belongs to the N-acetylglucosamine-1-phosphate uridyltransferase family. The protein in the C-terminal section; belongs to the transferase hexapeptide repeat family. Homotrimer. Mg(2+) serves as cofactor.

Its subcellular location is the cytoplasm. The catalysed reaction is alpha-D-glucosamine 1-phosphate + acetyl-CoA = N-acetyl-alpha-D-glucosamine 1-phosphate + CoA + H(+). It catalyses the reaction N-acetyl-alpha-D-glucosamine 1-phosphate + UTP + H(+) = UDP-N-acetyl-alpha-D-glucosamine + diphosphate. Its pathway is nucleotide-sugar biosynthesis; UDP-N-acetyl-alpha-D-glucosamine biosynthesis; N-acetyl-alpha-D-glucosamine 1-phosphate from alpha-D-glucosamine 6-phosphate (route II): step 2/2. The protein operates within nucleotide-sugar biosynthesis; UDP-N-acetyl-alpha-D-glucosamine biosynthesis; UDP-N-acetyl-alpha-D-glucosamine from N-acetyl-alpha-D-glucosamine 1-phosphate: step 1/1. It functions in the pathway bacterial outer membrane biogenesis; LPS lipid A biosynthesis. Functionally, catalyzes the last two sequential reactions in the de novo biosynthetic pathway for UDP-N-acetylglucosamine (UDP-GlcNAc). The C-terminal domain catalyzes the transfer of acetyl group from acetyl coenzyme A to glucosamine-1-phosphate (GlcN-1-P) to produce N-acetylglucosamine-1-phosphate (GlcNAc-1-P), which is converted into UDP-GlcNAc by the transfer of uridine 5-monophosphate (from uridine 5-triphosphate), a reaction catalyzed by the N-terminal domain. The protein is Bifunctional protein GlmU of Paraburkholderia xenovorans (strain LB400).